A 521-amino-acid polypeptide reads, in one-letter code: Zinc finger protein GLIS2 (521 aa).

Positions 35–174 (ALHRELGLVD…AKQLVCRWAK (140 aa)) are interaction with CTNND1. Disordered regions lie at residues 41–63 (GLVD…LLNP) and 84–110 (SPPS…DLPP). Residues 49–58 (PGSPGSPPPG) are compositionally biased toward pro residues. The tract at residues 71–137 (GRFSAAPLVD…SSFQFFLPLG (67 aa)) is transcription activation. Residues 84–100 (SPPSGLDSPNGSSSLSP) are compositionally biased toward low complexity. Residues 148 to 171 (SFLPPPKDKCLSPELPLAKQLVCR) are transcription repression. The C2H2-type 1 zinc finger occupies 168-193 (LVCRWAKCNQLFELLQDLVDHVNDHH). The C2H2-type 2; atypical zinc-finger motif lies at 202-229 (YCCHWEGCARHGRGFNARYKMLIHIRTH). C2H2-type zinc fingers lie at residues 235–257 (HRCP…NRSH), 263–287 (YVCP…TRTH), and 293–317 (YYCK…IKAH). A disordered region spans residues 436 to 501 (AGSKAEGEKG…NSAASSPEVL (66 aa)). Residues 455–470 (GLEDHKTPLERTERSR) are compositionally biased toward basic and acidic residues. Positions 487 to 496 (DLSTGNSAAS) are enriched in polar residues.

The protein belongs to the GLI C2H2-type zinc-finger protein family. In terms of assembly, interacts with CTBP1 and HDAC3. Interacts with CTNNB1 and CTNND1. Interacts with SUFU. Post-translationally, C-terminus cleavage is induced by interaction with CTNND1 and enhances by Src tyrosine kinase. As to expression, expressed at high levels in kidney, and at lower levels in heart and lung.

It localises to the nucleus speckle. Its subcellular location is the cytoplasm. Functionally, can act either as a transcriptional repressor or as a transcriptional activator, depending on the cell context. Acts as a repressor of the Hedgehog signaling pathway. Represses the Hedgehog-dependent expression of Wnt4. Necessary to maintain the differentiated epithelial phenotype in renal cells through the inhibition of SNAI1, which itself induces the epithelial-to-mesenchymal transition. Represses transcriptional activation by CTNNB1 in the Wnt signaling pathway. May act by recruiting the corepressors CTBP1 and HDAC3. May be involved in neuron differentiation. This chain is Zinc finger protein GLIS2 (Glis2), found in Mus musculus (Mouse).